The following is a 181-amino-acid chain: Large ribosomal subunit protein uL5 (181 aa).

It belongs to the universal ribosomal protein uL5 family. As to quaternary structure, part of the 50S ribosomal subunit; contacts the 5S rRNA and probably tRNA. Forms a bridge to the 30S subunit in the 70S ribosome.

In terms of biological role, this is one of the proteins that bind and probably mediate the attachment of the 5S RNA into the large ribosomal subunit, where it forms part of the central protuberance. In the 70S ribosome it contacts protein S13 of the 30S subunit (bridge B1b), connecting the 2 subunits; this bridge is implicated in subunit movement. May contact the P site tRNA; the 5S rRNA and some of its associated proteins might help stabilize positioning of ribosome-bound tRNAs. The chain is Large ribosomal subunit protein uL5 from Methanococcus maripaludis (strain DSM 14266 / JCM 13030 / NBRC 101832 / S2 / LL).